We begin with the raw amino-acid sequence, 512 residues long: Activin receptor type-2B (512 aa).

A signal peptide spans 1–18 (MTAPWVALALLWGSLCAG). Over 19 to 137 (SGRGEAETRE…PPPTAPTLLT (119 aa)) the chain is Extracellular. Cystine bridges form between Cys-29–Cys-59, Cys-49–Cys-77, Cys-84–Cys-103, Cys-90–Cys-102, and Cys-104–Cys-109. N-linked (GlcNAc...) asparagine glycosylation is found at Asn-42 and Asn-65. A helical membrane pass occupies residues 138–158 (VLAYSLLPIGGLSLIVLLAFW). The Cytoplasmic segment spans residues 159–512 (MYRHRKPPYG…VDLPPKESSI (354 aa)). Positions 190-480 (LQLLEIKARG…AGCVEERVSL (291 aa)) constitute a Protein kinase domain. Residues 196–204 (KARGRFGCV) and Lys-217 each bind ATP. The Proton acceptor role is filled by Asp-321. The interval 491-512 (DCLVSLVTSVTNVDLPPKESSI) is interaction with DYNLT1.

The protein belongs to the protein kinase superfamily. TKL Ser/Thr protein kinase family. TGFB receptor subfamily. In terms of assembly, forms an activin receptor complex with activin type II receptors such as ACVR1B. Interacts with VPS39. Interacts with DYNLT1. Interacts with BMP3. Interacts with BMP2. Interacts with BMP6. The cofactor is Mg(2+). Requires Mn(2+) as cofactor. Post-translationally, phosphorylated. Constitutive phosphorylation is in part catalyzed by its own kinase activity.

It is found in the cell membrane. The enzyme catalyses L-threonyl-[receptor-protein] + ATP = O-phospho-L-threonyl-[receptor-protein] + ADP + H(+). The catalysed reaction is L-seryl-[receptor-protein] + ATP = O-phospho-L-seryl-[receptor-protein] + ADP + H(+). Transmembrane serine/threonine kinase activin type-2 receptor forming an activin receptor complex with activin type-1 serine/threonine kinase receptors (ACVR1, ACVR1B or ACVR1c). Transduces the activin signal from the cell surface to the cytoplasm and is thus regulating many physiological and pathological processes including neuronal differentiation and neuronal survival, hair follicle development and cycling, FSH production by the pituitary gland, wound healing, extracellular matrix production, immunosuppression and carcinogenesis. Activin is also thought to have a paracrine or autocrine role in follicular development in the ovary. Within the receptor complex, the type-2 receptors act as a primary activin receptors (binds activin-A/INHBA, activin-B/INHBB as well as inhibin-A/INHA-INHBA). The type-1 receptors like ACVR1B act as downstream transducers of activin signals. Activin binds to type-2 receptor at the plasma membrane and activates its serine-threonine kinase. The activated receptor type-2 then phosphorylates and activates the type-1 receptor. Once activated, the type-1 receptor binds and phosphorylates the SMAD proteins SMAD2 and SMAD3, on serine residues of the C-terminal tail. Soon after their association with the activin receptor and subsequent phosphorylation, SMAD2 and SMAD3 are released into the cytoplasm where they interact with the common partner SMAD4. This SMAD complex translocates into the nucleus where it mediates activin-induced transcription. Inhibitory SMAD7, which is recruited to ACVR1B through FKBP1A, can prevent the association of SMAD2 and SMAD3 with the activin receptor complex, thereby blocking the activin signal. Activin signal transduction is also antagonized by the binding to the receptor of inhibin-B via the IGSF1 inhibin coreceptor. The sequence is that of Activin receptor type-2B (ACVR2B) from Homo sapiens (Human).